Consider the following 390-residue polypeptide: Lipoyl synthase, mitochondrial (390 aa).

Residues 1–19 (MPTLLRILRPPRSPFTRCL) constitute a mitochondrion transit peptide. The tract at residues 23–48 (ATPSSSGSSSRSKFTESLETGPGLDD) is disordered. [4Fe-4S] cluster-binding residues include cysteine 98, cysteine 103, cysteine 109, cysteine 136, cysteine 140, cysteine 143, and serine 350. Residues 119–339 (AEGRSAATAT…KEVAENLGFL (221 aa)) enclose the Radical SAM core domain.

Belongs to the radical SAM superfamily. Lipoyl synthase family. [4Fe-4S] cluster serves as cofactor.

It localises to the mitochondrion. The catalysed reaction is [[Fe-S] cluster scaffold protein carrying a second [4Fe-4S](2+) cluster] + N(6)-octanoyl-L-lysyl-[protein] + 2 oxidized [2Fe-2S]-[ferredoxin] + 2 S-adenosyl-L-methionine + 4 H(+) = [[Fe-S] cluster scaffold protein] + N(6)-[(R)-dihydrolipoyl]-L-lysyl-[protein] + 4 Fe(3+) + 2 hydrogen sulfide + 2 5'-deoxyadenosine + 2 L-methionine + 2 reduced [2Fe-2S]-[ferredoxin]. It participates in protein modification; protein lipoylation via endogenous pathway; protein N(6)-(lipoyl)lysine from octanoyl-[acyl-carrier-protein]: step 2/2. Catalyzes the radical-mediated insertion of two sulfur atoms into the C-6 and C-8 positions of the octanoyl moiety bound to the lipoyl domains of lipoate-dependent enzymes, thereby converting the octanoylated domains into lipoylated derivatives. The chain is Lipoyl synthase, mitochondrial from Laccaria bicolor (strain S238N-H82 / ATCC MYA-4686) (Bicoloured deceiver).